A 501-amino-acid chain; its full sequence is Aldehyde dehydrogenase, cytosolic 1 (501 aa).

Position 246-251 (246-251 (GSTEVG)) interacts with NAD(+). Residue glutamate 269 is the Proton acceptor of the active site. Cysteine 303 serves as the catalytic Nucleophile.

Belongs to the aldehyde dehydrogenase family. As to quaternary structure, homotetramer. As to expression, eye specific, with very high expression in the lens.

Its subcellular location is the cytoplasm. The catalysed reaction is an aldehyde + NAD(+) + H2O = a carboxylate + NADH + 2 H(+). It participates in alcohol metabolism; ethanol degradation; acetate from ethanol: step 2/2. In terms of biological role, major component of the eye of elephant shrews, which in contrast to other mammals, possesses both a lens- and a non-lens class-1 aldehyde dehydrogenase 1. This eye-specific form is a structural protein of the lens and, in other part of the eye, serves as the major form of ALDH1. Can convert/oxidize retinaldehyde to retinoic acid. In Elephantulus edwardii (Cape long-eared elephant shrew), this protein is Aldehyde dehydrogenase, cytosolic 1 (ALDH1).